The chain runs to 208 residues: MATLKANKRTDFKRSTLQKIRHSGHVPGVIYGKNTDNLAVSLDSIDLLKTLRDEGKNTIITLDVNGETKSVMVTELQTDPLKNELVHADFQVVDLQREIEADVPVQLIGESKGVKDGGVLQQPLFELSITAKPKDIPQHIEADITNLEVNDVLTVADLPVQSSYQVNNDPEEVVASILPPQQSEVPEPDSEEEPKEPEAIKEKDNDGE.

The interval 178–208 is disordered; sequence LPPQQSEVPEPDSEEEPKEPEAIKEKDNDGE. The span at 186-195 shows a compositional bias: acidic residues; it reads PEPDSEEEPK. Positions 196 to 208 are enriched in basic and acidic residues; the sequence is EPEAIKEKDNDGE.

Belongs to the bacterial ribosomal protein bL25 family. CTC subfamily. In terms of assembly, part of the 50S ribosomal subunit; part of the 5S rRNA/L5/L18/L25 subcomplex. Contacts the 5S rRNA. Binds to the 5S rRNA independently of L5 and L18.

Functionally, this is one of the proteins that binds to the 5S RNA in the ribosome where it forms part of the central protuberance. In Bacillus pumilus (strain SAFR-032), this protein is Large ribosomal subunit protein bL25.